We begin with the raw amino-acid sequence, 255 residues long: DNA repair protein RecO (255 aa).

Belongs to the RecO family.

Its function is as follows. Involved in DNA repair and RecF pathway recombination. The polypeptide is DNA repair protein RecO (Listeria monocytogenes serotype 4b (strain CLIP80459)).